The sequence spans 85 residues: Acyl carrier protein ScoB (85 aa).

Residues 1–77 (MPAPLTLDGF…QWWQLLSARQ (77 aa)) form the Carrier domain. S38 bears the O-(pantetheine 4'-phosphoryl)serine mark.

It belongs to the acyl carrier protein (ACP) family. The cofactor is pantetheine 4'-phosphate.

It functions in the pathway lipid metabolism; fatty acid metabolism. Functionally, acyl-carrier protein (ACP) involved in the biosynthesis of a unique class of isonitrile lipopeptides (INLPs). Is the dedicated ACP for the loading of activated acyl groups catalyzed by ScoC. The protein is Acyl carrier protein ScoB of Streptomyces coeruleorubidus.